The sequence spans 474 residues: Bifunctional protein HldE (474 aa).

The ribokinase stretch occupies residues 1–318; it reads MKMTLPDFHC…ENAIRGRAET (318 aa). ATP is bound at residue 195–198; that stretch reads NLSE. Residue Asp264 is part of the active site. The interval 344-474 is cytidylyltransferase; sequence MTNGCFDILH…TNIIKAIKNQ (131 aa).

The protein in the N-terminal section; belongs to the carbohydrate kinase PfkB family. In the C-terminal section; belongs to the cytidylyltransferase family. Homodimer.

It catalyses the reaction D-glycero-beta-D-manno-heptose 7-phosphate + ATP = D-glycero-beta-D-manno-heptose 1,7-bisphosphate + ADP + H(+). The catalysed reaction is D-glycero-beta-D-manno-heptose 1-phosphate + ATP + H(+) = ADP-D-glycero-beta-D-manno-heptose + diphosphate. The protein operates within nucleotide-sugar biosynthesis; ADP-L-glycero-beta-D-manno-heptose biosynthesis; ADP-L-glycero-beta-D-manno-heptose from D-glycero-beta-D-manno-heptose 7-phosphate: step 1/4. Its pathway is nucleotide-sugar biosynthesis; ADP-L-glycero-beta-D-manno-heptose biosynthesis; ADP-L-glycero-beta-D-manno-heptose from D-glycero-beta-D-manno-heptose 7-phosphate: step 3/4. It participates in bacterial outer membrane biogenesis; LPS core biosynthesis. Catalyzes the phosphorylation of D-glycero-D-manno-heptose 7-phosphate at the C-1 position to selectively form D-glycero-beta-D-manno-heptose-1,7-bisphosphate. Functionally, catalyzes the ADP transfer from ATP to D-glycero-beta-D-manno-heptose 1-phosphate, yielding ADP-D-glycero-beta-D-manno-heptose. The sequence is that of Bifunctional protein HldE from Photorhabdus laumondii subsp. laumondii (strain DSM 15139 / CIP 105565 / TT01) (Photorhabdus luminescens subsp. laumondii).